Reading from the N-terminus, the 1025-residue chain is Collagen alpha-1(VI) chain (1025 aa).

The signal sequence occupies residues Met1–Thr19. The segment at Gln20–Arg255 is N-terminal globular domain. Positions Asp36–Ile234 constitute a VWFA 1 domain. The N-linked (GlcNAc...) asparagine glycan is linked to Asn211. The tract at residues Gln252–Pro588 is disordered. Positions Gly256 to Asp591 are triple-helical region. Residues Arg261–Asp263 carry the Cell attachment site motif. Basic and acidic residues-rich tracts occupy residues Glu267–Asp284 and Lys300–Lys333. 2 short sequence motifs (cell attachment site) span residues Arg441 to Asp443 and Arg477 to Asp479. N-linked (GlcNAc...) asparagine glycans are attached at residues Asn515 and Asn536. Positions Gly549 to Asn559 are enriched in acidic residues. Pro residues predominate over residues Pro578–Pro588. Positions Glu592–Gly1025 are C-terminal globular domain. VWFA domains follow at residues Asp614–Ile802 and Asp826–Val1018. N-linked (GlcNAc...) asparagine glycosylation is found at Asn801 and Asn893.

This sequence belongs to the type VI collagen family. As to quaternary structure, trimers composed of three different chains: alpha-1(VI), alpha-2(VI), and alpha-3(VI) or alpha-4(VI) or alpha-5(VI) or alpha-6(VI). Post-translationally, prolines at the third position of the tripeptide repeating unit (G-X-Y) are hydroxylated in some or all of the chains.

It is found in the secreted. The protein resides in the extracellular space. It localises to the extracellular matrix. In terms of biological role, collagen VI acts as a cell-binding protein. In Mus musculus (Mouse), this protein is Collagen alpha-1(VI) chain (Col6a1).